A 360-amino-acid chain; its full sequence is MSLKAIKYSNGKLEILDQLLLPAQSKYIDVKGVEDGWKAINKMQVRGAPAIAIVGCLSLAVEIFGEKFDTKQTFKQEVEGKLNYLVSARPTAVNMKLAAEDLISLANALAQDESISVDTMKERFLKAIEDMLDKDIADNMAIGKNGADIILSHIPNGGSVRILTHCNTGSLATAGYGTALGVIRKLHEMNRLEHVYCTETRPYNQGARLTAYELVHDKLPATLILDNMVASLFKSRRVAAVVVGADRVAANGDTANKIGTYQIGVVAKYHDVPFYVAAPFTSIDLKIPSGDRIVIEERPDREMTHVGEHRIAAPGIACWNPAFDVTTADLITGIITEKGVFKPAELKEKVEQIISTNQKL.

D246 functions as the Proton donor in the catalytic mechanism.

The protein belongs to the eIF-2B alpha/beta/delta subunits family. MtnA subfamily.

The protein localises to the cytoplasm. Its subcellular location is the nucleus. It catalyses the reaction 5-(methylsulfanyl)-alpha-D-ribose 1-phosphate = 5-(methylsulfanyl)-D-ribulose 1-phosphate. It functions in the pathway amino-acid biosynthesis; L-methionine biosynthesis via salvage pathway; L-methionine from S-methyl-5-thio-alpha-D-ribose 1-phosphate: step 1/6. Functionally, catalyzes the interconversion of methylthioribose-1-phosphate (MTR-1-P) into methylthioribulose-1-phosphate (MTRu-1-P). The chain is Methylthioribose-1-phosphate isomerase from Aedes aegypti (Yellowfever mosquito).